The primary structure comprises 217 residues: ATP phosphoribosyltransferase (217 aa).

The protein belongs to the ATP phosphoribosyltransferase family. Short subfamily. As to quaternary structure, heteromultimer composed of HisG and HisZ subunits.

The protein localises to the cytoplasm. The enzyme catalyses 1-(5-phospho-beta-D-ribosyl)-ATP + diphosphate = 5-phospho-alpha-D-ribose 1-diphosphate + ATP. The protein operates within amino-acid biosynthesis; L-histidine biosynthesis; L-histidine from 5-phospho-alpha-D-ribose 1-diphosphate: step 1/9. Its function is as follows. Catalyzes the condensation of ATP and 5-phosphoribose 1-diphosphate to form N'-(5'-phosphoribosyl)-ATP (PR-ATP). Has a crucial role in the pathway because the rate of histidine biosynthesis seems to be controlled primarily by regulation of HisG enzymatic activity. The chain is ATP phosphoribosyltransferase from Burkholderia multivorans (strain ATCC 17616 / 249).